The following is a 479-amino-acid chain: Cardiolipin synthase A (479 aa).

Transmembrane regions (helical) follow at residues F8 to V28 and I38 to F58. PLD phosphodiesterase domains follow at residues V218–Y245 and Q392–S419. Active-site residues include H223, K225, D230, H397, K399, and D404.

This sequence belongs to the phospholipase D family. Cardiolipin synthase subfamily. ClsA sub-subfamily.

It localises to the cell inner membrane. It catalyses the reaction 2 a 1,2-diacyl-sn-glycero-3-phospho-(1'-sn-glycerol) = a cardiolipin + glycerol. Its function is as follows. Catalyzes the reversible phosphatidyl group transfer from one phosphatidylglycerol molecule to another to form cardiolipin (CL) (diphosphatidylglycerol) and glycerol. The protein is Cardiolipin synthase A of Pseudomonas entomophila (strain L48).